The chain runs to 190 residues: Peptidoglycan recognition protein 1 (190 aa).

Positions 1–21 are cleaved as a signal peptide; it reads MSRRYTPLAWVLLALLGLGAA. Gln-22 bears the Pyrrolidone carboxylic acid mark. 3 disulfides stabilise this stretch: Cys-24-Cys-148, Cys-40-Cys-85, and Cys-61-Cys-67. The 129-residue stretch at 46 to 174 folds into the N-acetylmuramoyl-L-alanine amidase domain; that stretch reads QPVRYVVVSH…RDVQQTLSPG (129 aa).

Belongs to the N-acetylmuramoyl-L-alanine amidase 2 family. In terms of assembly, homodimer; disulfide-linked.

It localises to the secreted. The protein resides in the cytoplasmic granule. Its function is as follows. Innate immunity protein that plays several important functions in antimicrobial and antitumor defense systems. Acts as a pattern receptor that binds to murein peptidoglycans (PGN) of Gram-positive bacteria and thus provides bactericidal activity. Forms an equimolar complex with heat shock protein HSPA1A and induces programmed cell death through apoptosis and necroptosis in tumor cell lines by activating the TNFR1 receptor on the target cell membrane. In addition, acts in complex with the Ca(2+)-binding protein S100A4 as a chemoattractant able to induce lymphocyte movement. Mechanistically, this complex acts as a ligand of the chemotactic receptors CCR5 and CXCR3 which are present on the cells of the immune system. Promotes also the activation of lymphocytes that become able to kill virus-infected cells as well as tumor cells by modulating the spectrum of their target-cell specificity. Induction of cytotoxicity on monocyte surface requires interaction with TREM1 receptor. The chain is Peptidoglycan recognition protein 1 (PGLYRP1) from Bos indicus (Zebu).